Consider the following 364-residue polypeptide: Aminomethyltransferase (364 aa).

Belongs to the GcvT family. The glycine cleavage system is composed of four proteins: P, T, L and H.

The enzyme catalyses N(6)-[(R)-S(8)-aminomethyldihydrolipoyl]-L-lysyl-[protein] + (6S)-5,6,7,8-tetrahydrofolate = N(6)-[(R)-dihydrolipoyl]-L-lysyl-[protein] + (6R)-5,10-methylene-5,6,7,8-tetrahydrofolate + NH4(+). In terms of biological role, the glycine cleavage system catalyzes the degradation of glycine. The protein is Aminomethyltransferase of Shewanella sp. (strain MR-4).